The primary structure comprises 551 residues: Putative ABC transporter ATP-binding protein BA_3364/GBAA_3364/BAS3118 (551 aa).

ABC transporter domains are found at residues 5-243 (AEIK…FRPF) and 293-525 (LSAE…SINR). Residues 39 to 46 (GGSGSGKT) and 327 to 334 (GKNGTGKS) contribute to the ATP site.

It belongs to the ABC transporter superfamily.

It is found in the cell membrane. In terms of biological role, probably part of an ABC transporter complex. Responsible for energy coupling to the transport system. The protein is Putative ABC transporter ATP-binding protein BA_3364/GBAA_3364/BAS3118 of Bacillus anthracis.